Here is a 180-residue protein sequence, read N- to C-terminus: Ribulose bisphosphate carboxylase small subunit, chloroplastic 3 (180 aa).

The transit peptide at 1-56 directs the protein to the chloroplast; that stretch reads MASMISSSAVTTVSRASTVQSAAVAPFGGLKSMTGFPVKKVNTDITSITSNGGRVK.

Belongs to the RuBisCO small chain family. As to quaternary structure, heterohexadecamer of 8 large and 8 small subunits.

The protein resides in the plastid. It localises to the chloroplast. RuBisCO catalyzes two reactions: the carboxylation of D-ribulose 1,5-bisphosphate, the primary event in carbon dioxide fixation, as well as the oxidative fragmentation of the pentose substrate. Both reactions occur simultaneously and in competition at the same active site. Although the small subunit is not catalytic it is essential for maximal activity. Binds to abscisic acid (ABA); only half of the possible binding sites are occupied in the crystal; and there are indications this is a low affinity site. This chain is Ribulose bisphosphate carboxylase small subunit, chloroplastic 3 (RBCS.3A), found in Pisum sativum (Garden pea).